Here is a 110-residue protein sequence, read N- to C-terminus: Large ribosomal subunit protein uL22 (110 aa).

This sequence belongs to the universal ribosomal protein uL22 family. As to quaternary structure, part of the 50S ribosomal subunit.

Functionally, this protein binds specifically to 23S rRNA; its binding is stimulated by other ribosomal proteins, e.g. L4, L17, and L20. It is important during the early stages of 50S assembly. It makes multiple contacts with different domains of the 23S rRNA in the assembled 50S subunit and ribosome. Its function is as follows. The globular domain of the protein is located near the polypeptide exit tunnel on the outside of the subunit, while an extended beta-hairpin is found that lines the wall of the exit tunnel in the center of the 70S ribosome. This chain is Large ribosomal subunit protein uL22, found in Acinetobacter baumannii (strain ACICU).